A 231-amino-acid polypeptide reads, in one-letter code: Probable glutathione S-transferase (231 aa).

One can recognise a GST N-terminal domain in the interval 4-96 (PNFELYGYFR…YLEEALPTNA (93 aa)). Glutathione-binding positions include Ser-14, Gln-43, Val-57, 80 to 81 (QS), Gln-124, and 128 to 130 (NLK). The GST C-terminal domain maps to 105–227 (NPVARAHVRT…HWQKQEDTPE (123 aa)).

Belongs to the GST superfamily. Zeta family. As to quaternary structure, homodimer.

It catalyses the reaction RX + glutathione = an S-substituted glutathione + a halide anion + H(+). In terms of biological role, probable glutathione S-transferase. The polypeptide is Probable glutathione S-transferase (Coccidioides immitis (strain RS) (Valley fever fungus)).